The following is a 229-amino-acid chain: Protein GrpE (229 aa).

Disordered regions lie at residues 1 to 49 (MTEG…SANS) and 207 to 229 (DSTA…EDGD). Positions 13–24 (TDKRRIDPDTGE) are enriched in basic and acidic residues.

The protein belongs to the GrpE family. As to quaternary structure, homodimer.

Its subcellular location is the cytoplasm. Participates actively in the response to hyperosmotic and heat shock by preventing the aggregation of stress-denatured proteins, in association with DnaK and GrpE. It is the nucleotide exchange factor for DnaK and may function as a thermosensor. Unfolded proteins bind initially to DnaJ; upon interaction with the DnaJ-bound protein, DnaK hydrolyzes its bound ATP, resulting in the formation of a stable complex. GrpE releases ADP from DnaK; ATP binding to DnaK triggers the release of the substrate protein, thus completing the reaction cycle. Several rounds of ATP-dependent interactions between DnaJ, DnaK and GrpE are required for fully efficient folding. In Mycobacterium leprae (strain TN), this protein is Protein GrpE.